A 142-amino-acid polypeptide reads, in one-letter code: Large ribosomal subunit protein bL17 (142 aa).

It belongs to the bacterial ribosomal protein bL17 family. Part of the 50S ribosomal subunit. Contacts protein L32.

This chain is Large ribosomal subunit protein bL17, found in Wolbachia pipientis wMel.